We begin with the raw amino-acid sequence, 445 residues long: Phosphoglucosamine mutase (445 aa).

Ser-102 serves as the catalytic Phosphoserine intermediate. Mg(2+)-binding residues include Ser-102, Asp-241, Asp-243, and Asp-245. The residue at position 102 (Ser-102) is a Phosphoserine.

This sequence belongs to the phosphohexose mutase family. It depends on Mg(2+) as a cofactor. Post-translationally, activated by phosphorylation.

It catalyses the reaction alpha-D-glucosamine 1-phosphate = D-glucosamine 6-phosphate. Its function is as follows. Catalyzes the conversion of glucosamine-6-phosphate to glucosamine-1-phosphate. The protein is Phosphoglucosamine mutase of Rhodococcus erythropolis (strain PR4 / NBRC 100887).